Consider the following 85-residue polypeptide: Inhibitor of dGTPase (85 aa).

Interacts with host dGTPase/dgt.

Plays a role in increasing the intracellular pool of dGTP. Interacts with and inhibits host dGTPase/dgt. The complex made of the host dGTPase and gene 1.2 protein creates a GTP-binding site of high affinity. Subsequent binding of GTP to the enzyme-inhibitor complex inhibits its dissociation. The protein is Inhibitor of dGTPase of Escherichia coli (Bacteriophage T7).